A 352-amino-acid polypeptide reads, in one-letter code: Nuclear receptor subfamily 1 group I member 3 (352 aa).

Positions 8–83 (LRNCVVCGDQ…AGMRKDMILS (76 aa)) form a DNA-binding region, nuclear receptor. Residues 11–31 (CVVCGDQATGYHFNALTCEGC) form an NR C4-type zinc finger. Residue threonine 38 is modified to Phosphothreonine; by PKC. The NR C4-type zinc finger occupies 47 to 71 (CPFAGSCEVSKTQRRHCPACRLQKC). One can recognise an NR LBD domain in the interval 109–352 (EQEELIRTLL…MMPLLQEICS (244 aa)).

The protein belongs to the nuclear hormone receptor family. NR1 subfamily. Interacts with ECT2. Heterodimer of NR1I3 and RXR. Interacts with PSMC4. Directly interacts with DNAJC7. The DNAJC7-NR1I3 complex may also include HSP90. Interacts with CRY1. Interacts with CRY2 in a ligand-dependent manner. Post-translationally, phosphorylated at Thr-38 by PKC, dephosphorylation of Thr-38 is required for nuclear translocation and activation. As to expression, predominantly expressed in liver.

It localises to the nucleus. It is found in the cytoplasm. The protein resides in the cytoskeleton. Binds and transactivates the retinoic acid response elements that control expression of the retinoic acid receptor beta 2 and alcohol dehydrogenase 3 genes. Transactivates both the phenobarbital responsive element module of the human CYP2B6 gene and the CYP3A4 xenobiotic response element. The sequence is that of Nuclear receptor subfamily 1 group I member 3 (NR1I3) from Homo sapiens (Human).